The chain runs to 757 residues: RNA-directed RNA polymerase catalytic subunit (757 aa).

Residues 50 to 82 (SEKGKWTTNTETGAPQLNPIDGPLPEDNEPSGY) are disordered. A compositionally biased stretch (polar residues) spans 55-64 (WTTNTETGAP). 2 consecutive short sequence motifs (nuclear localization signal) follow at residues 187–195 (RKRRVRDNM) and 203–216 (RTIG…NKRS). The interval 249 to 256 (RGFVYFVE) is promoter-binding site. Residues 286–483 (VRKMMTNSQD…GINMSKKKSY (198 aa)) enclose the RdRp catalytic domain.

This sequence belongs to the influenza viruses polymerase PB1 family. Influenza RNA polymerase is composed of three subunits: PB1, PB2 and PA. Interacts (via N-terminus) with PA (via C-terminus). Interacts (via C-terminus) with PB2 (via N-terminus); this interaction is essential for transcription initiation. In terms of processing, phosphorylated by host PRKCA.

The protein localises to the host nucleus. It localises to the host cytoplasm. It carries out the reaction RNA(n) + a ribonucleoside 5'-triphosphate = RNA(n+1) + diphosphate. In terms of biological role, RNA-dependent RNA polymerase which is responsible for replication and transcription of virus RNA segments. The transcription of viral mRNAs occurs by a unique mechanism called cap-snatching. 5' methylated caps of cellular mRNAs are cleaved after 10-13 nucleotides by PA. In turn, these short capped RNAs are used as primers by PB1 for transcription of viral mRNAs. During virus replication, PB1 initiates RNA synthesis and copy vRNA into complementary RNA (cRNA) which in turn serves as a template for the production of more vRNAs. The polypeptide is RNA-directed RNA polymerase catalytic subunit (Influenza A virus (strain A/Udorn/307/1972 H3N2)).